Consider the following 314-residue polypeptide: Acetaldehyde dehydrogenase (314 aa).

15–18 (SGNI) lines the NAD(+) pocket. C133 serves as the catalytic Acyl-thioester intermediate. Residues 164–172 (SAGPGTRAN) and N292 each bind NAD(+).

This sequence belongs to the acetaldehyde dehydrogenase family.

The enzyme catalyses acetaldehyde + NAD(+) + CoA = acetyl-CoA + NADH + H(+). The chain is Acetaldehyde dehydrogenase from Paraburkholderia phytofirmans (strain DSM 17436 / LMG 22146 / PsJN) (Burkholderia phytofirmans).